The primary structure comprises 628 residues: Dual specificity testis-specific protein kinase 1 (628 aa).

A disordered region spans residues 1 to 35; that stretch reads MAGERPPLRGPGPGETPVEGPGGAGGGPGRGRPSS. Over residues 20 to 30 the composition is skewed to gly residues; it reads GPGGAGGGPGR. In terms of domain architecture, Protein kinase spans 52 to 310; sequence FDCAEKIGAG…EITQHLEQIL (259 aa). ATP is bound by residues 58-66 and K81; that span reads IGAGFFSEV. D170 functions as the Proton acceptor in the catalytic mechanism. S215 is modified (phosphoserine; by autocatalysis). Disordered stretches follow at residues 330–376, 424–490, and 538–568; these read TYNQ…DNLT, PESL…QLPL, and RAQH…EEGL. The residue at position 338 (R338) is an Omega-N-methylarginine. The span at 348–357 shows a compositional bias: basic and acidic residues; it reads SDPRLSRSRS. Residues 421–526 are required for interaction with YWHAB; sequence VASPESLVQP…NNNPPAVVVN (106 aa). Residue S439 is modified to Phosphoserine. Pro residues predominate over residues 478-487; sequence EPEPPGPAPQ. The required for interaction with PARVA stretch occupies residues 529-626; that stretch reads QGWAREPWNR…PTPSLQLPGA (98 aa). The interval 529 to 628 is required for interaction with SPRED1 and SPRY2. Required for TESK1-mediated dephosphorylation of SPRY2 and SPRY2 inhibition of ERK phosphorylation; sequence QGWAREPWNR…PSLQLPGARS (100 aa).

Belongs to the protein kinase superfamily. TKL Ser/Thr protein kinase family. In terms of assembly, interacts (via both C- and N-termini) with SPRY4 (via C-terminus); the interaction inhibits TESK1 kinase activity. Interacts with TAOK1; the interaction inhibits TAOK1 kinase activity. Interacts (via C-terminus) with SPRED1 (via C-terminus); the interaction inhibits TESK1 kinase activity. Interacts (via C-terminus) with PARVA/PARVIN (via C-terminus); the interaction inhibits TESK1 kinase activity. Interacts with YWHAB/14-3-3 beta; the interaction is dependent on the phosphorylation of TESK1 Ser-439 and inhibits TESK1 kinase activity. Interacts with SPRY1, SPRY3 and SPRED2. Interacts (via C-terminus) with SPRY2 (via C-terminus); the interaction disrupts SPRY2 interaction with PPP2CA/PP2A-C, possibly by vesicular sequestration of SPRY2. Therefore dephosphorylation of SPRY2 by the serine/threonine-protein phosphatase 2A (PP2A) holoenzyme is lost, inhibiting its interaction with GRB2. Mg(2+) is required as a cofactor. Requires Mn(2+) as cofactor. Post-translationally, autophosphorylated on serine and tyrosine residues. As to expression, weakly expressed in sciatic nerves (at protein level). Highly expressed in testicular germ cells. Expressed at low levels in brain, lung, heart, liver and kidney.

Its subcellular location is the cytoplasm. It localises to the perinuclear region. The protein localises to the cytoskeleton. It is found in the microtubule organizing center. The protein resides in the centrosome. Its subcellular location is the cell projection. It localises to the lamellipodium. It carries out the reaction L-seryl-[protein] + ATP = O-phospho-L-seryl-[protein] + ADP + H(+). It catalyses the reaction L-threonyl-[protein] + ATP = O-phospho-L-threonyl-[protein] + ADP + H(+). The catalysed reaction is L-tyrosyl-[protein] + ATP = O-phospho-L-tyrosyl-[protein] + ADP + H(+). Its activity is regulated as follows. Activated by autophosphorylation on Ser-215. Kinase activity is inhibited by SPRED1. In terms of biological role, dual specificity protein kinase activity catalyzing autophosphorylation and phosphorylation of exogenous substrates on both serine/threonine and tyrosine residues. Regulates the cellular cytoskeleton by enhancing actin stress fiber formation via phosphorylation of cofilin and by preventing microtubule breakdown via inhibition of TAOK1/MARKK kinase activity. Inhibits podocyte motility via regulation of actin cytoskeletal dynamics and phosphorylation of CFL1. Positively regulates integrin-mediated cell spreading, via phosphorylation of cofilin. Suppresses ciliogenesis via multiple pathways; phosphorylation of CFL1, suppression of ciliary vesicle directional trafficking to the ciliary base, and by facilitating YAP1 nuclear localization where it acts as a transcriptional corepressor of the TEAD4 target genes AURKA and PLK1. Probably plays a central role at and after the meiotic phase of spermatogenesis. This is Dual specificity testis-specific protein kinase 1 (Tesk1) from Rattus norvegicus (Rat).